Consider the following 324-residue polypeptide: Probable UDP-sugar transporter protein SLC35A4 (324 aa).

Residues 1–18 (MSVEDGGMPGLARPKQAR) lie on the Cytoplasmic side of the membrane. Residues 19–39 (WTLMLFLSTAMYGAHAPFLAL) traverse the membrane as a helical segment. The Lumenal portion of the chain corresponds to 40 to 52 (CHVDGRVPFRPSS). Residues 53-73 (AVLLTELTKLLLCAFSLLVGW) form a helical membrane-spanning segment. The Cytoplasmic portion of the chain corresponds to 74-85 (QTWPQGTPPWRQ). The helical transmembrane segment at 86–106 (AAPFALSALLYGANNNLVIYL) threads the bilayer. Topologically, residues 107 to 142 (QRYMDPSTYQVLSNLKIGSTALLYCLCLGHRLSARQ) are lumenal. A helical membrane pass occupies residues 143–163 (GLALLLLMAAGACYASGGFQE). Over 164–180 (PGNTLPGPRSAAGARPM) the chain is Cytoplasmic. Residues 181 to 201 (PLHITPLGLLLLILYCLISGL) traverse the membrane as a helical segment. The Lumenal portion of the chain corresponds to 202–214 (SSVYTELIMKRQR). Residues 215–235 (LPLALQNLFLYTFGVILNLGL) form a helical membrane-spanning segment. Topologically, residues 236-248 (YAGSGPGPGFLEG) are cytoplasmic. Residues 249–271 (FSGWAVLVVLNQAVNGLLMSAVM) form a helical membrane-spanning segment. Topologically, residues 272–279 (KHGSSITR) are lumenal. The helical transmembrane segment at 280–300 (LFIVSCSLVVNAVLSAVLLQL) threads the bilayer. Over 301-324 (QLTATFFLAALLIGLAVCLYYGSP) the chain is Cytoplasmic.

The protein belongs to the nucleotide-sugar transporter family. SLC35A subfamily. In terms of assembly, found in a complex with SLC35A2 and SLC35A3. As to expression, expressed in the kidney, lung, testis, and prostate. Expressed in the brain by sets of neurons, such as the pyramidal cells of the cortex, the Purkinje cells of the cerebellum, and the motoneurons of the brainstem.

Its subcellular location is the golgi apparatus membrane. It catalyses the reaction CDP-L-ribitol(in) + CDP(out) = CDP-L-ribitol(out) + CDP(in). In terms of biological role, mediates the transport of CDP-ribitol. Does not exhibit CMP-sialic acid, UDP-galactose and UDP-N-acetylglucosamine transport activity. The chain is Probable UDP-sugar transporter protein SLC35A4 from Rattus norvegicus (Rat).